A 253-amino-acid chain; its full sequence is Blue-light photoreceptor (253 aa).

Positions 6–79 constitute a PAS domain; the sequence is KFDVILKALN…AKIRHAINEK (74 aa). At Cys-56 the chain carries S-4a-FMN cysteine. Residues 80-133 enclose the PAC domain; it reads STANVLLKNYRKNGTSFMNELTIEPIYDDNDHLYFVGIQKDVTTEHNYQLELEK. Positions 142 to 253 constitute an STAS domain; sequence STPIVPIKEN…STIKEALQFY (112 aa).

FMN binds covalently to cysteine after exposure to blue light and this bond is spontaneously broken in the dark.

Functionally, exhibits the same spectroscopical features and blue-light induced photochemistry as plants phototropins, with the reversible formation of a blue-shifted photoproduct, assigned to an FMN-cysteine thiol adduct. Positive regulator in the activation of the general stress transcription factor sigma-B. The chain is Blue-light photoreceptor from Listeria innocua serovar 6a (strain ATCC BAA-680 / CLIP 11262).